A 500-amino-acid polypeptide reads, in one-letter code: Inner membrane transporter YjeM (500 aa).

Topologically, residues 1 to 7 (MPHTIKK) are cytoplasmic. The helical transmembrane segment at 8 to 28 (MSLIGLILMIFTSVFGFANSP) threads the bilayer. The Periplasmic portion of the chain corresponds to 29 to 37 (SAYYLMGYS). The helical transmembrane segment at 38–58 (AIPFYIFSALLFFIPFALMMA) threads the bilayer. The Cytoplasmic portion of the chain corresponds to 59–82 (EMGAAYRKEEGGIYSWMNNSVGPR). Residues 83–103 (FAFIGTFMWFSSYIIWMVSTS) traverse the membrane as a helical segment. Residues 104–132 (AKVWVPFSTFLYGSDMTQHWRIAGLEPTQ) are Periplasmic-facing. Residues 133-153 (VVGLLAVAWMILVTVVASKGI) form a helical membrane-spanning segment. Residues 154–163 (NKIARITAVG) are Cytoplasmic-facing. Residues 164 to 184 (GIAVMCLNLVLLLVSITILLL) traverse the membrane as a helical segment. Topologically, residues 185-209 (NGGHFAQDINFLASPNPGYQSGLAM) are periplasmic. Residues 210–230 (LSFVVFAIFAYGGIEAVGGLV) form a helical membrane-spanning segment. The Cytoplasmic portion of the chain corresponds to 231-243 (DKTENPEKNFAKG). The helical transmembrane segment at 244-264 (IVFAAIVISIGYSLAIFLWGV) threads the bilayer. The Periplasmic segment spans residues 265-319 (STNWQQVLSNGSVNLGNITYVLMKSLGMTLGNALHLSPEASLSLGVWFARITGLS). The chain crosses the membrane as a helical span at residues 320 to 340 (MFLAYTGAFFTLCYSPLKAII). Residues 341-369 (QGTPKALWPEPMTRLNAMGMPSIAMWMQC) are Cytoplasmic-facing. A helical transmembrane segment spans residues 370–390 (GLVTVFILLVSFGGGTASAFF). At 391 to 394 (NKLT) the chain is on the periplasmic side. Residues 395–415 (LMANVSMTLPYLFLALAFPFF) form a helical membrane-spanning segment. Topologically, residues 416–433 (KARQDLDRPFVIFKTHLS) are cytoplasmic. The chain crosses the membrane as a helical span at residues 434-454 (AMIATVVVVLVVTFANVFTII). The Periplasmic segment spans residues 455–462 (QPVVEAGD). Residues 463–483 (WDSTLWMIGGPVFFSLLAMAI) form a helical membrane-spanning segment. Topologically, residues 484–500 (YQNYCSRVAKNPQWAVE) are cytoplasmic.

The protein belongs to the amino acid-polyamine-organocation (APC) superfamily.

The protein localises to the cell inner membrane. The chain is Inner membrane transporter YjeM (yjeM) from Escherichia coli (strain K12).